Consider the following 159-residue polypeptide: Glutamate-rich protein GrpA (159 aa).

The protein is Glutamate-rich protein GrpA (grpA) of Alkalihalophilus pseudofirmus (strain ATCC BAA-2126 / JCM 17055 / OF4) (Bacillus pseudofirmus).